We begin with the raw amino-acid sequence, 390 residues long: Putative nickel insertion protein (390 aa).

The protein belongs to the LarC family.

This chain is Putative nickel insertion protein, found in Geotalea daltonii (strain DSM 22248 / JCM 15807 / FRC-32) (Geobacter daltonii).